A 270-amino-acid chain; its full sequence is Putative carboxymethylenebutenolidase (270 aa).

Catalysis depends on residues C147, D204, and H236.

Belongs to the dienelactone hydrolase family.

The enzyme catalyses 2-(5-oxo-2,5-dihydrofuran-2-ylidene)acetate + H2O = 4-oxohex-2-enedioate + H(+). This is Putative carboxymethylenebutenolidase (ysgA) from Salmonella typhimurium (strain LT2 / SGSC1412 / ATCC 700720).